A 139-amino-acid polypeptide reads, in one-letter code: ATP synthase epsilon chain (139 aa).

The protein belongs to the ATPase epsilon chain family. F-type ATPases have 2 components, CF(1) - the catalytic core - and CF(0) - the membrane proton channel. CF(1) has five subunits: alpha(3), beta(3), gamma(1), delta(1), epsilon(1). CF(0) has three main subunits: a, b and c.

It localises to the cell inner membrane. Its function is as follows. Produces ATP from ADP in the presence of a proton gradient across the membrane. The chain is ATP synthase epsilon chain from Acinetobacter baumannii (strain AB307-0294).